The following is a 154-amino-acid chain: 6,7-dimethyl-8-ribityllumazine synthase (154 aa).

5-amino-6-(D-ribitylamino)uracil is bound by residues Phe23, 57–59, and 81–83; these read AYE and AVI. 86–87 is a (2S)-2-hydroxy-3-oxobutyl phosphate binding site; the sequence is GT. Residue His89 is the Proton donor of the active site. 5-amino-6-(D-ribitylamino)uracil is bound at residue Phe114. Arg128 lines the (2S)-2-hydroxy-3-oxobutyl phosphate pocket.

Belongs to the DMRL synthase family. In terms of assembly, forms an icosahedral capsid composed of 60 subunits, arranged as a dodecamer of pentamers.

It catalyses the reaction (2S)-2-hydroxy-3-oxobutyl phosphate + 5-amino-6-(D-ribitylamino)uracil = 6,7-dimethyl-8-(1-D-ribityl)lumazine + phosphate + 2 H2O + H(+). Its pathway is cofactor biosynthesis; riboflavin biosynthesis; riboflavin from 2-hydroxy-3-oxobutyl phosphate and 5-amino-6-(D-ribitylamino)uracil: step 1/2. Catalyzes the formation of 6,7-dimethyl-8-ribityllumazine by condensation of 5-amino-6-(D-ribitylamino)uracil with 3,4-dihydroxy-2-butanone 4-phosphate. This is the penultimate step in the biosynthesis of riboflavin. The chain is 6,7-dimethyl-8-ribityllumazine synthase from Acidithiobacillus ferrooxidans (strain ATCC 23270 / DSM 14882 / CIP 104768 / NCIMB 8455) (Ferrobacillus ferrooxidans (strain ATCC 23270)).